The following is a 1820-amino-acid chain: Afadin (1820 aa).

The region spanning 39 to 133 (FHGVMRFYFQ…GRFVLKNEND (95 aa)) is the Ras-associating 1 domain. The segment at 129 to 196 (KNENDAIPAK…PSQGDDSENS (68 aa)) is disordered. Positions 146 to 186 (EKQEKEGVIQNFKRTLSKKEKKEKKKKEKEALRQASDKEER) form a coiled coil. Basic residues predominate over residues 160–172 (TLSKKEKKEKKKK). Positions 173 to 189 (EKEALRQASDKEERPSQ) are enriched in basic and acidic residues. A phosphoserine mark is found at S216, S246, and S256. The Ras-associating 2 domain maps to 246 to 348 (SGGTLRIYAD…LVFQLKRRPP (103 aa)). Basic and acidic residues predominate over residues 356–371 (KKHVEGKSLKGKDRAD). The tract at residues 356-377 (KKHVEGKSLKGKDRADGSGYGS) is disordered. Residues S391 and S424 each carry the phosphoserine modification. The FHA domain maps to 426 to 492 (TEVGTEKFDD…LQSGMRLQFG (67 aa)). Phosphoserine is present on residues S512, S557, S562, S655, S1083, S1107, S1126, S1140, S1143, S1172, S1173, S1182, and S1199. The tract at residues 538 to 569 (GDVHSGTALPASRSTTRLDSDRVSSASSTAER) is disordered. Residues 653 to 908 (DISPTERTHK…IENVVAVAEN (256 aa)) enclose the Dilute domain. Positions 1007 to 1093 (IITVTLKKQN…VVTLEVAKQG (87 aa)) constitute a PDZ domain. Residues 1107–1194 (SPMMQRISDR…GKGPYTSGTA (88 aa)) form a disordered region. Residues 1113-1128 (ISDRRGSGKPRPKSEG) show a composition bias toward basic and acidic residues. Positions 1132–1143 (YNNSAQNGSPES) are enriched in polar residues. Basic and acidic residues predominate over residues 1152 to 1172 (SEPKKLPGDDRLMKNRADHRS). The disordered stretch occupies residues 1203 to 1222 (GNLCTEEQSPPPRPEAYPIP). Residue T1232 is modified to Phosphothreonine. Disordered stretches follow at residues 1235–1278 (ASKS…SQEE), 1308–1527 (QSSS…KQQQ), and 1567–1716 (RLQE…LKTQ). S1238 bears the Phosphoserine mark. A compositionally biased stretch (basic and acidic residues) spans 1252–1262 (YEEKPHVHTES). The residue at position 1275 (S1275) is a Phosphoserine. Positions 1309-1318 (SSSVESSTSS) are enriched in low complexity. Over residues 1325–1337 (SSKSVTPASTLTK) the composition is skewed to polar residues. Phosphoserine is present on S1328. T1330 is modified (phosphothreonine). The segment covering 1364-1373 (LPPPPPPPPV) has biased composition (pro residues). Over residues 1407-1440 (EWKKREEHQRWYEKEKARLEEERERKRREQERKL) the composition is skewed to basic and acidic residues. Positions 1410 to 1446 (KREEHQRWYEKEKARLEEERERKRREQERKLGQMRSQ) form a coiled coil. Over residues 1443–1457 (MRSQTLNPASFSPLA) the composition is skewed to polar residues. Residues 1487–1503 (TIERKDLQYITISKEEL) are compositionally biased toward basic and acidic residues. Residues S1499 and S1510 each carry the phosphoserine modification. Residues 1513–1526 (PWKRDAREKLEKQQ) show a composition bias toward basic and acidic residues. Positions 1523–1561 (EKQQQMHIVDMLSKEIHELQNKVDRTAEESDRLRKLMLE) form a coiled coil. The span at 1576–1587 (EDDDEEEDDDVD) shows a compositional bias: acidic residues. The stretch at 1593-1665 (QRLEAERRAR…SRLEAERRRQ (73 aa)) forms a coiled coil. Over residues 1595-1675 (LEAERRARMQ…HEEAARRLLE (81 aa)) the composition is skewed to basic and acidic residues. A phosphoserine mark is found at S1694, S1719, S1770, and S1795. Residues 1734 to 1820 (EEEDYGPAGP…TELENELNTK (87 aa)) form a disordered region. The segment covering 1759 to 1772 (APREAREKLTRSQD) has biased composition (basic and acidic residues). Residues 1800–1820 (VSDKVKASRKLTELENELNTK) show a composition bias toward basic and acidic residues. Position 1803 is an N6-acetyllysine (K1803).

In terms of assembly, homodimer. Interacts with F-actin, nectin and NECTIN3. Essential for the association of nectin and E-cadherin. Isoform 2/s-afadin does not interact with F-actin. Interacts with ZO-1 and occludin, but probably in an indirect manner. Interacts with RIT1, RIT2, NRXN1 and BCR. Interacts with ADAM10; the interaction locks ADAM10 at adherens junctions following ADAM10 recruitment to adherens junctions by TSPAN33. In terms of tissue distribution, isoform 1 is expressed only in a restricted set of epithelial structures during early embryogenesis.

It localises to the cell junction. The protein resides in the adherens junction. Belongs to an adhesion system, probably together with the E-cadherin-catenin system, which plays a role in the organization of homotypic, interneuronal and heterotypic cell-cell adherens junctions (AJs). Nectin- and actin-filament-binding protein that connects nectin to the actin cytoskeleton. May play a key role in the organization of epithelial structures of the embryonic ectoderm. Essential for the organization of adherens junctions. This is Afadin from Mus musculus (Mouse).